The primary structure comprises 117 residues: Ribosome-binding factor A (117 aa).

The protein belongs to the RbfA family. In terms of assembly, monomer. Binds 30S ribosomal subunits, but not 50S ribosomal subunits or 70S ribosomes.

It localises to the cytoplasm. Functionally, one of several proteins that assist in the late maturation steps of the functional core of the 30S ribosomal subunit. Associates with free 30S ribosomal subunits (but not with 30S subunits that are part of 70S ribosomes or polysomes). Required for efficient processing of 16S rRNA. May interact with the 5'-terminal helix region of 16S rRNA. The sequence is that of Ribosome-binding factor A from Streptococcus suis (strain 98HAH33).